Reading from the N-terminus, the 332-residue chain is MNTETTQDTTEAKLPGERLREARERLGLTQQTIAERLCLKITTVRDIEDGTTPADLAPTFLRGYIRSYAKLVHLPEDNLLPIMDKQAVPKAISVSPMQSFSLKKSRKKRDGWLMIITWLVVLVVLGLTGAWWWQNHQAQQAEINSMVDHASSMQSQTEGQSVPLMDNSAPQETSTAGSAATPPSTPVDLSATIAATPSTPPSSTTASSAAPSSQSPSQANATQSQAAGNALLGAGAVAPAATVADSNPVSAAHALVMTFTADCWLEVTDVSGKKLFSGMQRNGSTLNLDGQSPYQLKIGAPAAVQIKFQGKPVDLSRFVRSSQVARLTLTAE.

The Cytoplasmic portion of the chain corresponds to 1-111 (MNTETTQDTT…LKKSRKKRDG (111 aa)). Residues 19 to 71 (LREARERLGLTQQTIAERLCLKITTVRDIEDGTTPADLAPTFLRGYIRSYAKL) enclose the HTH cro/C1-type domain. Residues 30–49 (QQTIAERLCLKITTVRDIED) constitute a DNA-binding region (H-T-H motif). A helical; Signal-anchor for type II membrane protein transmembrane segment spans residues 112-132 (WLMIITWLVVLVVLGLTGAWW). Residues 133–332 (WQNHQAQQAE…QVARLTLTAE (200 aa)) are Periplasmic-facing. Residues 149–225 (HASSMQSQTE…PSQANATQSQ (77 aa)) form a disordered region. 2 stretches are compositionally biased toward polar residues: residues 151 to 160 (SSMQSQTEGQ) and 168 to 182 (SAPQ…AATP). Low complexity predominate over residues 190 to 225 (SATIAATPSTPPSSTTASSAAPSSQSPSQANATQSQ).

It belongs to the RodZ family.

It localises to the cell inner membrane. In terms of biological role, cytoskeletal protein that is involved in cell-shape control through regulation of the length of the long axis. The chain is Cytoskeleton protein RodZ from Pectobacterium atrosepticum (strain SCRI 1043 / ATCC BAA-672) (Erwinia carotovora subsp. atroseptica).